The sequence spans 579 residues: uncharacterized protein (579 aa).

12 consecutive transmembrane segments (helical) span residues A20–I40, A54–A74, L86–G106, G142–A162, W174–I194, F204–Q224, W234–A254, I279–A299, V310–I330, P335–C355, L366–V386, and M467–F487. A disordered region spans residues R516–L579. The segment covering P526–S540 has biased composition (low complexity). Positions D570–L579 are enriched in polar residues.

It belongs to the major facilitator superfamily. EmrB family.

It is found in the cell membrane. This is an uncharacterized protein from Mycobacterium tuberculosis (strain ATCC 25618 / H37Rv).